The sequence spans 291 residues: MSNTEFHPHIGVGLRLPHHDHFHHHRPALSWLEIHSENYFQPNSFHRQQLNQMAEHYQISCHGIGLSLGSVAGVNPQHLLRLKQLVDDLQPFLVSDHLSWSENGGHYFNDLLPLPYTEEALEVFCRNVLHVQDALKRPILIENPSSYLKYQHSTISEWQFLTEVQRRTDCRLLLDLNNVYVSAFNHGFDCQTYLEAIPAACVDEIHLAGFTIKSLEQGEIWIDTHSQPVSAEVWQLYQQWIAQHGSRHTLIEWDLDLPPVDVLLNEAKKADTLLRASLLHTNPMHPSLALG.

The protein belongs to the UPF0276 family.

The chain is UPF0276 protein VV1_0952 from Vibrio vulnificus (strain CMCP6).